The chain runs to 55 residues: Large ribosomal subunit protein bL33 (55 aa).

It belongs to the bacterial ribosomal protein bL33 family.

In Hamiltonella defensa subsp. Acyrthosiphon pisum (strain 5AT), this protein is Large ribosomal subunit protein bL33.